The following is a 192-amino-acid chain: A-type ATP synthase subunit E (192 aa).

Residues M1–A66 form a disordered region. Residues E8–E26 are compositionally biased toward basic and acidic residues. Acidic residues predominate over residues E27–R49. Residues E50–A66 are compositionally biased toward basic and acidic residues.

Belongs to the V-ATPase E subunit family. In terms of assembly, has multiple subunits with at least A(3), B(3), C, D, E, F, H, I and proteolipid K(x).

Its subcellular location is the cell membrane. Functionally, component of the A-type ATP synthase that produces ATP from ADP in the presence of a proton gradient across the membrane. This Natronomonas pharaonis (strain ATCC 35678 / DSM 2160 / CIP 103997 / JCM 8858 / NBRC 14720 / NCIMB 2260 / Gabara) (Halobacterium pharaonis) protein is A-type ATP synthase subunit E.